We begin with the raw amino-acid sequence, 246 residues long: B-cell receptor-associated protein 31 (246 aa).

At 2–6 the chain is on the lumenal side; sequence SLQWT. Residues 7–27 form a helical membrane-spanning segment; the sequence is AVATFLYAEVFVVLLLCIPFI. Over 28-43 the chain is Cytoplasmic; it reads SPKRWQKIFKSRLVEL. The helical transmembrane segment at 44 to 64 threads the bilayer; it reads LVSYGNTFFVVLIVILVLLVI. Over 65–102 the chain is Lumenal; sequence DAVREIRKYDDVTEKVNLQNNPGAMEHFHMKLFRAQRN. Residues 103–123 form a helical membrane-spanning segment; that stretch reads LYIAGFSLLLSFLLRRLVTLI. At 124 to 246 the chain is on the cytoplasmic side; the sequence is SQQATLLASN…VDGPMDKKEE (123 aa). Residues 165 to 237 adopt a coiled-coil conformation; sequence GGKLDVGNAE…EEHAKLQAAV (73 aa). Positions 243–246 match the Di-lysine motif motif; it reads KKEE.

This sequence belongs to the BCAP29/BCAP31 family. As to quaternary structure, homodimer and heterodimer with BCAP29. Binds CASP8 (isoform 9) as a complex containing BCAP31, BCAP29, BCL2 and/or BCL2L1. Forms a complex (via C-terminus) with TOMM40 which mediates the translocation of components of the mitochondrial membrane respiratory chain NADH dehydrogenase (Complex I) from the cytosol to the mitochondria; within the complex BCAP31 interacts directly with unprocessed and processed NDUFS4 and NDUFB11. Interacts with VDAC1. Interacts with VAMP3, VAMP1 and membrane IgD immunoglobulins. Interacts with HACD2. Interacts with DNM1L; may form part of a larger protein complex at the endoplasmic reticulum-mitochondrial interface during mitochondrial fission. (Microbial infection) Interacts (via C-terminus) with HRSV membrane protein SH; this interaction is direct. In terms of processing, cleaved by CASP8 and other caspases. In terms of tissue distribution, ubiquitous. Highly expressed in neurons and discrete endocrine cells.

The protein localises to the endoplasmic reticulum membrane. The protein resides in the endoplasmic reticulum-Golgi intermediate compartment membrane. Functions as a chaperone protein. Is one of the most abundant endoplasmic reticulum (ER) proteins. Plays a role in the export of secreted proteins in the ER, the recognition of abnormally folded protein and their targeting to the ER associated-degradation (ERAD). Also serves as a cargo receptor for the export of transmembrane proteins. Plays a role in the assembly of the mitochondrial membrane respiratory chain NADH dehydrogenase (Complex I) by stimulating the translocation of NDUFS4 and NDUFB11 from the cytosol to the mitochondria via interaction with TOMM40. In response to ER stress, delocalizes from the ER-mitochondria contact sites and binds BCL2. May be involved in CASP8-mediated apoptosis. In Homo sapiens (Human), this protein is B-cell receptor-associated protein 31.